Here is a 247-residue protein sequence, read N- to C-terminus: Small ribosomal subunit protein eS6 (247 aa).

Positions 194 to 247 (ALKKKRVTKKREDHAEYTKLLAQRMKEAKERKMERKRSNSRSKGDSIRESTSKK) are disordered. Residues 217 to 247 (RMKEAKERKMERKRSNSRSKGDSIRESTSKK) are compositionally biased toward basic and acidic residues.

It belongs to the eukaryotic ribosomal protein eS6 family. In terms of processing, ribosomal protein S6 is the major substrate of protein kinases in eukaryote ribosomes.

In terms of biological role, component of the 40S small ribosomal subunit. Plays an important role in controlling cell growth and proliferation through the selective translation of particular classes of mRNA. The polypeptide is Small ribosomal subunit protein eS6 (RPS6) (Aplysia californica (California sea hare)).